The chain runs to 841 residues: Alpha-glucuronidase A (841 aa).

Residues 1–20 (MRGSNLFQLTLALLLSLVAA) form the signal peptide. N-linked (GlcNAc...) asparagine glycosylation is found at Asn-51, Asn-76, Asn-149, Asn-222, Asn-279, Asn-310, Asn-343, Asn-450, Asn-465, Asn-527, Asn-576, Asn-682, Asn-723, and Asn-732.

Belongs to the glycosyl hydrolase 67 family.

It localises to the secreted. It carries out the reaction an alpha-D-glucuronoside + H2O = D-glucuronate + an alcohol. Alpha-glucuronidase involved in the hydrolysis of xylan, a major structural heterogeneous polysaccharide found in plant biomass representing the second most abundant polysaccharide in the biosphere, after cellulose. Releases 4-O-methylglucuronic acid from xylan. This chain is Alpha-glucuronidase A (aguA), found in Aspergillus tubingensis.